A 159-amino-acid chain; its full sequence is 2-amino-4-hydroxy-6-hydroxymethyldihydropteridine pyrophosphokinase (159 aa).

Belongs to the HPPK family. Monomer.

The enzyme catalyses 6-hydroxymethyl-7,8-dihydropterin + ATP = (7,8-dihydropterin-6-yl)methyl diphosphate + AMP + H(+). The protein operates within cofactor biosynthesis; tetrahydrofolate biosynthesis; 2-amino-4-hydroxy-6-hydroxymethyl-7,8-dihydropteridine diphosphate from 7,8-dihydroneopterin triphosphate: step 4/4. Its function is as follows. Catalyzes the transfer of pyrophosphate from adenosine triphosphate (ATP) to 6-hydroxymethyl-7,8-dihydropterin, an enzymatic step in folate biosynthesis pathway. The chain is 2-amino-4-hydroxy-6-hydroxymethyldihydropteridine pyrophosphokinase (folK) from Escherichia coli (strain K12).